Consider the following 239-residue polypeptide: Tetraspanin-9 (239 aa).

Topologically, residues 1-13 (MARGCLCCLKYTM) are cytoplasmic. The chain crosses the membrane as a helical span at residues 14–34 (FLFNLIFWLCGCGLLGVGIWL). Topologically, residues 35-55 (SVSQGNFATFSPSFPSLSAAN) are extracellular. The helical transmembrane segment at 56–76 (LVIAIGTIVMVTGFLGCLGAI) threads the bilayer. The Cytoplasmic segment spans residues 77–85 (KENKCLLLS). The helical transmembrane segment at 86 to 106 (FFIVLLIILLAELILIILFFV) threads the bilayer. Residues 107–203 (YMDKVNENAK…VKLWFDDNKH (97 aa)) are Extracellular-facing. A glycan (N-linked (GlcNAc...) asparagine) is linked at Asn-180. Residues 204–224 (VLGTVGMCILIMQILGMAFSM) form a helical membrane-spanning segment. The Cytoplasmic segment spans residues 225–239 (TLFQHIHRTGKKYDA).

The protein belongs to the tetraspanin (TM4SF) family. As to quaternary structure, found in a complex with GP6. Glycosylated. In terms of tissue distribution, strongly expressed in megakaryocytes, platelets and lung. Weakly expressed in bone marrow, brain and kidney (at protein level).

The protein localises to the membrane. In Mus musculus (Mouse), this protein is Tetraspanin-9 (Tspan9).